Here is a 215-residue protein sequence, read N- to C-terminus: MNVVLFGPPGAGKGTQAKELDKHYQIPHISTGDILRANVRDGTKLGKEAKGYMDKGELVPDEVLIGVIKNRLAESDCKPGYLLDGYPRTTPQADALSSILVEIGMPLEVVLNIDVADEELVTRLCGRYVCTCGESYHMKFNPPKKENVCDACGADLYQRDDDKEDVIRQRLDSYKEKTQPLISYYGEKGLLVDIDGTGAIDRIFSDICKTLDQYK.

10–15 (GAGKGT) contacts ATP. The tract at residues 30–59 (STGDILRANVRDGTKLGKEAKGYMDKGELV) is NMP. AMP-binding positions include threonine 31, arginine 36, 57-59 (ELV), 85-88 (GYPR), and glutamine 92. The tract at residues 126 to 162 (GRYVCTCGESYHMKFNPPKKENVCDACGADLYQRDDD) is LID. Arginine 127 is a binding site for ATP. The Zn(2+) site is built by cysteine 130 and cysteine 132. Position 135-136 (135-136 (SY)) interacts with ATP. Residues cysteine 149 and cysteine 152 each contribute to the Zn(2+) site. 2 residues coordinate AMP: arginine 159 and arginine 170. Glycine 198 is a binding site for ATP.

Belongs to the adenylate kinase family. In terms of assembly, monomer.

Its subcellular location is the cytoplasm. It carries out the reaction AMP + ATP = 2 ADP. It functions in the pathway purine metabolism; AMP biosynthesis via salvage pathway; AMP from ADP: step 1/1. Functionally, catalyzes the reversible transfer of the terminal phosphate group between ATP and AMP. Plays an important role in cellular energy homeostasis and in adenine nucleotide metabolism. The polypeptide is Adenylate kinase (Methanococcoides burtonii (strain DSM 6242 / NBRC 107633 / OCM 468 / ACE-M)).